A 465-amino-acid polypeptide reads, in one-letter code: uncharacterized protein (465 aa).

The region spanning 1 to 50 (MEITDLAAEGNALCRIDDMVMFVPFAAPGDRCTVQVVKKKRNFMQGRIVS) is the TRAM domain. 4 residues coordinate [4Fe-4S] cluster: C63, C69, C72, and C168. 4 residues coordinate S-adenosyl-L-methionine: Q293, Y322, E343, and D392. C419 acts as the Nucleophile in catalysis.

The protein belongs to the class I-like SAM-binding methyltransferase superfamily. RNA M5U methyltransferase family.

This is an uncharacterized protein from Porphyromonas gingivalis (strain ATCC BAA-308 / W83).